The following is a 342-amino-acid chain: 3-isopropylmalate dehydrogenase (342 aa).

4 residues coordinate substrate: R87, R97, R121, and D212. Mg(2+) is bound by residues D212, D236, and D240. 272-284 (GSAPDIAGRQLAD) is a binding site for NAD(+). Low complexity predominate over residues 319 to 328 (RAAAGAAQPS). The tract at residues 319-342 (RAAAGAAQPSTRERGEDLAARAAG) is disordered. Positions 329–342 (TRERGEDLAARAAG) are enriched in basic and acidic residues.

The protein belongs to the isocitrate and isopropylmalate dehydrogenases family. LeuB type 2 subfamily. Homodimer. Requires Mg(2+) as cofactor. It depends on Mn(2+) as a cofactor.

The protein localises to the cytoplasm. The enzyme catalyses (2R,3S)-3-isopropylmalate + NAD(+) = 4-methyl-2-oxopentanoate + CO2 + NADH. Its pathway is amino-acid biosynthesis; L-leucine biosynthesis; L-leucine from 3-methyl-2-oxobutanoate: step 3/4. Catalyzes the oxidation of 3-carboxy-2-hydroxy-4-methylpentanoate (3-isopropylmalate) to 3-carboxy-4-methyl-2-oxopentanoate. The product decarboxylates to 4-methyl-2 oxopentanoate. In Frankia casuarinae (strain DSM 45818 / CECT 9043 / HFP020203 / CcI3), this protein is 3-isopropylmalate dehydrogenase.